Here is a 519-residue protein sequence, read N- to C-terminus: Protein nucleotidyltransferase YdiU (519 aa).

The ATP site is built by G100, G102, R103, K123, D135, G136, R193, and R200. Catalysis depends on D270, which acts as the Proton acceptor. Mg(2+) contacts are provided by N271 and D280. D280 serves as a coordination point for ATP.

This sequence belongs to the SELO family. Mg(2+) is required as a cofactor. The cofactor is Mn(2+).

The catalysed reaction is L-seryl-[protein] + ATP = 3-O-(5'-adenylyl)-L-seryl-[protein] + diphosphate. It carries out the reaction L-threonyl-[protein] + ATP = 3-O-(5'-adenylyl)-L-threonyl-[protein] + diphosphate. It catalyses the reaction L-tyrosyl-[protein] + ATP = O-(5'-adenylyl)-L-tyrosyl-[protein] + diphosphate. The enzyme catalyses L-histidyl-[protein] + UTP = N(tele)-(5'-uridylyl)-L-histidyl-[protein] + diphosphate. The catalysed reaction is L-seryl-[protein] + UTP = O-(5'-uridylyl)-L-seryl-[protein] + diphosphate. It carries out the reaction L-tyrosyl-[protein] + UTP = O-(5'-uridylyl)-L-tyrosyl-[protein] + diphosphate. Its function is as follows. Nucleotidyltransferase involved in the post-translational modification of proteins. It can catalyze the addition of adenosine monophosphate (AMP) or uridine monophosphate (UMP) to a protein, resulting in modifications known as AMPylation and UMPylation. The polypeptide is Protein nucleotidyltransferase YdiU (Xylella fastidiosa (strain Temecula1 / ATCC 700964)).